We begin with the raw amino-acid sequence, 163 residues long: Phosphopantetheine adenylyltransferase (163 aa).

Residue Thr-10 participates in substrate binding. ATP-binding positions include 10–11 and His-18; that span reads TF. Substrate contacts are provided by Lys-42, Leu-74, and Arg-88. ATP is bound by residues 89 to 91, Glu-99, and 124 to 130; these read GLR and NSFISST.

This sequence belongs to the bacterial CoaD family. In terms of assembly, homohexamer. Mg(2+) is required as a cofactor.

The protein localises to the cytoplasm. The catalysed reaction is (R)-4'-phosphopantetheine + ATP + H(+) = 3'-dephospho-CoA + diphosphate. The protein operates within cofactor biosynthesis; coenzyme A biosynthesis; CoA from (R)-pantothenate: step 4/5. Its function is as follows. Reversibly transfers an adenylyl group from ATP to 4'-phosphopantetheine, yielding dephospho-CoA (dPCoA) and pyrophosphate. The sequence is that of Phosphopantetheine adenylyltransferase from Shewanella sp. (strain W3-18-1).